The primary structure comprises 325 residues: H-2 class I histocompatibility antigen, Q10 alpha chain (325 aa).

The signal sequence occupies residues 1-24 (MGAMAPRTLLLLLAAALAPTQTQA). The tract at residues 25 to 114 (GSHSMRYFET…LLGYYNQSES (90 aa)) is alpha-1. The Extracellular portion of the chain corresponds to 25–310 (GSHSMRYFET…PPSTDSIMSH (286 aa)). N-linked (GlcNAc...) asparagine glycosylation occurs at Asn-110. The tract at residues 115–206 (GSHTIQWMYG…ELGKETLLRT (92 aa)) is alpha-2. 2 disulfide bridges follow: Cys-125–Cys-188 and Cys-227–Cys-283. The alpha-3 stretch occupies residues 207–298 (DPPKTHVTHH…GLPEPLTLRW (92 aa)). An Ig-like C1-type domain is found at 209 to 297 (PKTHVTHHPG…EGLPEPLTLR (89 aa)). Residue Asn-280 is glycosylated (N-linked (GlcNAc...) asparagine). Residues 299 to 310 (EPPPSTDSIMSH) are connecting peptide. The helical transmembrane segment at 311–324 (IADLLWPSLKLWWY) threads the bilayer.

This sequence belongs to the MHC class I family. Heterodimer of an alpha chain and a beta chain (beta-2-microglobulin).

The protein localises to the membrane. Involved in the presentation of foreign antigens to the immune system. The protein is H-2 class I histocompatibility antigen, Q10 alpha chain (H2-Q10) of Mus musculus (Mouse).